A 200-amino-acid polypeptide reads, in one-letter code: Peptidyl-tRNA hydrolase (200 aa).

TRNA is bound at residue Tyr-14. His-19 acts as the Proton acceptor in catalysis. Residues Phe-64, Asn-66, and Asn-112 each contribute to the tRNA site.

Belongs to the PTH family. As to quaternary structure, monomer.

It is found in the cytoplasm. The catalysed reaction is an N-acyl-L-alpha-aminoacyl-tRNA + H2O = an N-acyl-L-amino acid + a tRNA + H(+). Functionally, hydrolyzes ribosome-free peptidyl-tRNAs (with 1 or more amino acids incorporated), which drop off the ribosome during protein synthesis, or as a result of ribosome stalling. Its function is as follows. Catalyzes the release of premature peptidyl moieties from peptidyl-tRNA molecules trapped in stalled 50S ribosomal subunits, and thus maintains levels of free tRNAs and 50S ribosomes. The protein is Peptidyl-tRNA hydrolase of Maricaulis maris (strain MCS10) (Caulobacter maris).